The chain runs to 671 residues: DNA ligase (671 aa).

NAD(+) is bound by residues 32–36, 81–82, and glutamate 113; these read DAEYD and SL. Lysine 115 (N6-AMP-lysine intermediate) is an active-site residue. The NAD(+) site is built by arginine 136, glutamate 173, lysine 290, and lysine 314. 4 residues coordinate Zn(2+): cysteine 408, cysteine 411, cysteine 426, and cysteine 432. Residues 593 to 671 form the BRCT domain; sequence EIDSPFAGKT…ETEMLRLLGS (79 aa).

Belongs to the NAD-dependent DNA ligase family. LigA subfamily. Mg(2+) is required as a cofactor. Requires Mn(2+) as cofactor.

The catalysed reaction is NAD(+) + (deoxyribonucleotide)n-3'-hydroxyl + 5'-phospho-(deoxyribonucleotide)m = (deoxyribonucleotide)n+m + AMP + beta-nicotinamide D-nucleotide.. DNA ligase that catalyzes the formation of phosphodiester linkages between 5'-phosphoryl and 3'-hydroxyl groups in double-stranded DNA using NAD as a coenzyme and as the energy source for the reaction. It is essential for DNA replication and repair of damaged DNA. The polypeptide is DNA ligase (Escherichia coli O81 (strain ED1a)).